The following is a 335-amino-acid chain: Methionine import ATP-binding protein MetN 1 (335 aa).

The 241-residue stretch at 2-242 (IEFQQVHKTY…PQHPTTKRFV (241 aa)) folds into the ABC transporter domain. 38-45 (GHSGAGKS) is a binding site for ATP.

Belongs to the ABC transporter superfamily. Methionine importer (TC 3.A.1.24) family. As to quaternary structure, the complex is composed of two ATP-binding proteins (MetN), two transmembrane proteins (MetI) and a solute-binding protein (MetQ).

The protein resides in the cell inner membrane. It carries out the reaction L-methionine(out) + ATP + H2O = L-methionine(in) + ADP + phosphate + H(+). The enzyme catalyses D-methionine(out) + ATP + H2O = D-methionine(in) + ADP + phosphate + H(+). Functionally, part of the ABC transporter complex MetNIQ involved in methionine import. Responsible for energy coupling to the transport system. The protein is Methionine import ATP-binding protein MetN 1 of Pseudomonas putida (strain ATCC 47054 / DSM 6125 / CFBP 8728 / NCIMB 11950 / KT2440).